Here is a 151-residue protein sequence, read N- to C-terminus: Mitochondrial intermembrane space import and assembly protein 40 homolog (151 aa).

Positions 1–35 (MGQGLSQPAQAVEEPSPPAVEAAPSSSPSPAPAPS) are disordered. Over residues 7–26 (QPAQAVEEPSPPAVEAAPSS) the composition is skewed to low complexity. Cystine bridges form between Cys-65-Cys-67, Cys-76-Cys-109, and Cys-86-Cys-99. A CHCH domain is found at 73 to 117 (NGPCGSQFVDAFSCFLKSTEEEKGSDCVKPFIALQDCIKINPEAF). 2 consecutive short sequence motifs (cx9C motif) follow at residues 76–86 (CGSQFVDAFSC) and 99–109 (CVKPFIALQDC). The interval 123-151 (EEEENDEEAEKSNLKVRAPAWSRESKPKL) is disordered.

It is found in the mitochondrion intermembrane space. The protein resides in the peroxisome matrix. In terms of biological role, required for the import and folding of small cysteine-containing proteins in the mitochondrial intermembrane space. This chain is Mitochondrial intermembrane space import and assembly protein 40 homolog, found in Oryza sativa subsp. japonica (Rice).